Here is a 399-residue protein sequence, read N- to C-terminus: Protein DDI1 homolog 2 (399 aa).

Positions 1-81 (MLLTVYCVRR…VILRQKENAD (81 aa)) constitute a Ubiquitin-like domain. The disordered stretch occupies residues 99–134 (IAVPGTSNPQQRQLPRTQAQHSSPGEMASSPQGLDN). Polar residues predominate over residues 103 to 131 (GTSNPQQRQLPRTQAQHSSPGEMASSPQG). T104 is subject to Phosphothreonine. S121, S128, S150, and S194 each carry phosphoserine. Residue D252 is part of the active site. A Ubiquitin-binding motif is present at residues 376–395 (EEIADQELAEAIQKSAEDAE).

The protein belongs to the DDI1 family. In terms of assembly, homodimer.

It is found in the cytoplasm. The protein resides in the cytosol. The protein localises to the chromosome. Functionally, aspartic protease that mediates the cleavage of NFE2L1/NRF1 at 'Leu-104', thereby promoting release of NFE2L1/NRF1 from the endoplasmic reticulum membrane. Ubiquitination of NFE2L1/NRF1 is a prerequisite for cleavage, suggesting that DDI2 specifically recognizes and binds ubiquitinated NFE2L1/NRF1. Seems to act as a proteasomal shuttle which links the proteasome and replication fork proteins like RTF2. Required, with DDI1, for cellular survival following replication stress. Together or redudantly with DDI1, removes RTF2 from stalled forks to allow cell cycle progression after replication stress and maintains genome integrity. This chain is Protein DDI1 homolog 2, found in Mus musculus (Mouse).